The following is an 837-amino-acid chain: Translation initiation factor IF-2 (837 aa).

2 disordered regions span residues 1 to 44 and 62 to 251; these read MTEK…VRKS and KAQE…TKPA. Composition is skewed to basic and acidic residues over residues 62 to 102 and 111 to 165; these read KAQE…EAKP and ADPE…HNDS. Basic residues predominate over residues 189–205; the sequence is RENHIRTGKNKVTKAKK. Basic and acidic residues predominate over residues 206–229; it reads GGRDDNGSKDERSADRRNQKDMRG. The segment covering 242–251 has biased composition (polar residues); sequence TLQQAFTKPA. Positions 337 to 506 constitute a tr-type G domain; the sequence is QRAPVVTIMG…LLQSEVLELT (170 aa). Residues 346–353 are G1; it reads GHVDHGKT. GTP is bound at residue 346–353; it reads GHVDHGKT. The tract at residues 371 to 375 is G2; that stretch reads GITQH. A G3 region spans residues 392-395; it reads DTPG. GTP-binding positions include 392–396 and 446–449; these read DTPGH and NKID. The segment at 446–449 is G4; that stretch reads NKID. The segment at 482 to 484 is G5; sequence SAK.

The protein belongs to the TRAFAC class translation factor GTPase superfamily. Classic translation factor GTPase family. IF-2 subfamily.

It localises to the cytoplasm. Its function is as follows. One of the essential components for the initiation of protein synthesis. Protects formylmethionyl-tRNA from spontaneous hydrolysis and promotes its binding to the 30S ribosomal subunits. Also involved in the hydrolysis of GTP during the formation of the 70S ribosomal complex. This is Translation initiation factor IF-2 from Actinobacillus succinogenes (strain ATCC 55618 / DSM 22257 / CCUG 43843 / 130Z).